A 148-amino-acid polypeptide reads, in one-letter code: Flagellar assembly factor FliW (148 aa).

It belongs to the FliW family. As to quaternary structure, interacts with translational regulator CsrA and flagellin(s).

Its subcellular location is the cytoplasm. In terms of biological role, acts as an anti-CsrA protein, binds CsrA and prevents it from repressing translation of its target genes, one of which is flagellin. Binds to flagellin and participates in the assembly of the flagellum. The polypeptide is Flagellar assembly factor FliW (Ruminiclostridium cellulolyticum (strain ATCC 35319 / DSM 5812 / JCM 6584 / H10) (Clostridium cellulolyticum)).